The chain runs to 294 residues: Mimecan (294 aa).

Residues methionine 1 to proline 19 form the signal peptide. An N-linked (GlcNAc...) asparagine glycan is attached at asparagine 61. LRR repeat units follow at residues glutamate 108–isoleucine 127, lysine 128–isoleucine 151, glutamate 152–leucine 175, valine 176–isoleucine 195, lysine 196–leucine 221, glutamate 222–isoleucine 242, and threonine 243–isoleucine 273. 2 N-linked (GlcNAc...) asparagine glycosylation sites follow: asparagine 241 and asparagine 254. A disulfide bridge links cysteine 251 with cysteine 284.

It belongs to the small leucine-rich proteoglycan (SLRP) family. SLRP class III subfamily. In terms of processing, the composition of the N-linked chains or the substitution of the N-linked sites is different between embryonic and adult tissues. Post-translationally, contains keratan sulfate.

The protein resides in the secreted. Its subcellular location is the extracellular space. It localises to the extracellular matrix. Its function is as follows. Induces bone formation in conjunction with TGF-beta-1 or TGF-beta-2. The chain is Mimecan (OGN) from Gallus gallus (Chicken).